The primary structure comprises 523 residues: La-related protein 1C (523 aa).

Over residues 1–16 (MASATSNNPASSSMSP) the composition is skewed to low complexity. Disordered regions lie at residues 1–52 (MASA…VRGE) and 95–313 (AAGD…VRHP). Alanine 2 carries the post-translational modification N-acetylalanine. Residues 22-31 (NHGSPTASVA) show a composition bias toward polar residues. 2 stretches are compositionally biased toward low complexity: residues 32–44 (QSPR…VSSP) and 146–169 (SNKS…ASSS). A Phosphoserine modification is found at serine 33. 2 stretches are compositionally biased toward polar residues: residues 206-270 (QRNG…NGNH) and 282-305 (HGNQ…SQRG). Residues 363–452 (HYQDPPLHMK…RDNWQNWVLR (90 aa)) enclose the HTH La-type RNA-binding domain. The disordered stretch occupies residues 474–523 (GNLSVDQSSADPIGGSSSQLQPTEALSDDQQQSSSTAPVSNHNAPDGANR). Over residues 477-516 (SVDQSSADPIGGSSSQLQPTEALSDDQQQSSSTAPVSNHN) the composition is skewed to polar residues.

This sequence belongs to the LARP family. In terms of tissue distribution, age-dependent accumulation in rosette leaves.

It is found in the cytoplasm. In terms of biological role, promotes leaf senescence mediated by abscisic acid (ABA), salicylic acid (SA) and jasmonic acid (MeJA), probably though the induction of expression of senescence-associated genes (SAGs) and defense-related genes. The chain is La-related protein 1C (LARP1C) from Arabidopsis thaliana (Mouse-ear cress).